Here is a 346-residue protein sequence, read N- to C-terminus: G-protein coupled receptor 42 (346 aa).

Topologically, residues 1 to 19 (MDTGPDQSYFSGNHWFVFS) are extracellular. A helical membrane pass occupies residues 20–40 (VYLLTFLVGLPLNLLALVVFV). The Cytoplasmic portion of the chain corresponds to 41–47 (GKLRCRP). A helical transmembrane segment spans residues 48–68 (VAVDVLLLNLTASDLLLLLFL). Topologically, residues 69–90 (PFRMVEAANGMHWPLPFILCPL) are extracellular. The helical transmembrane segment at 91–111 (SGFIFFTTIYLTALFLAAVSI) threads the bilayer. At 112–132 (ERFLSVAHPLWYKTRPRLGQA) the chain is on the cytoplasmic side. A helical transmembrane segment spans residues 133 to 153 (GLVSVACWLLASAHCSVVYVI). Topologically, residues 154–178 (EFSGDISHSQGTNGTCYLEFRKDQL) are extracellular. N166 carries an N-linked (GlcNAc...) asparagine glycan. A helical membrane pass occupies residues 179-199 (AILLPVRLEMAVVLFVVPLII). Over 200–222 (TSYCYSRLVWILGRGGSHRRQRR) the chain is Cytoplasmic. The helical transmembrane segment at 223–243 (VAGLVAATLLNFLVCFGPYNV) threads the bilayer. Residues 244 to 258 (SHVVGYICGESPVWR) are Extracellular-facing. The chain crosses the membrane as a helical span at residues 259–279 (IYVTLLSTLNSCVDPFVYYFS). Over 280–346 (SSGFQADFHE…TGGQVACAEN (67 aa)) the chain is Cytoplasmic. Over residues 307–330 (MELKEQKGGEEQRADRPAERKTSE) the composition is skewed to basic and acidic residues. A disordered region spans residues 307-346 (MELKEQKGGEEQRADRPAERKTSEHSQGCGTGGQVACAEN).

Belongs to the G-protein coupled receptor 1 family.

The protein resides in the cell membrane. In terms of biological role, g protein-coupled receptor that is activated by short chain fatty acids (SCFAs), such as propionate. Hence may play a role in the regulation of whole-body energy homeostasis and/or in intestinal immunity. This is G-protein coupled receptor 42 (GPR42) from Homo sapiens (Human).